A 307-amino-acid polypeptide reads, in one-letter code: Protoheme IX farnesyltransferase (307 aa).

9 helical membrane-spanning segments follow: residues 33–53 (IGIV…AFYF), 62–82 (LHIV…SCSI), 111–131 (RVLW…LMTT), 132–152 (VTAA…YTLW), 159–179 (LNTV…WTAV), 185–205 (IVPL…FLAL), 229–249 (MTKR…FYLF), 251–271 (LGIP…LLGL), and 287–307 (FVYS…ATIW).

The protein belongs to the UbiA prenyltransferase family. Protoheme IX farnesyltransferase subfamily. In terms of assembly, interacts with CtaA.

The protein localises to the cell membrane. The catalysed reaction is heme b + (2E,6E)-farnesyl diphosphate + H2O = Fe(II)-heme o + diphosphate. It participates in porphyrin-containing compound metabolism; heme O biosynthesis; heme O from protoheme: step 1/1. Its function is as follows. Converts heme B (protoheme IX) to heme O by substitution of the vinyl group on carbon 2 of heme B porphyrin ring with a hydroxyethyl farnesyl side group. This chain is Protoheme IX farnesyltransferase, found in Geobacillus thermodenitrificans (strain NG80-2).